Here is a 241-residue protein sequence, read N- to C-terminus: Hydantoin racemase (241 aa).

It belongs to the HyuE racemase family. Homotetramer.

It catalyses the reaction a D-5-monosubstituted hydantoin = a L-5-monosubstituted hydantoin. It carries out the reaction D-5-benzylhydantoin = L-5-benzylhydantoin. The catalysed reaction is D-5-isobutylhydantoin = L-5-isobutylhydantoin. Its activity is regulated as follows. Inhibited by Cu(2+), Hg(2+), Pb(2+) and Zn(2+). The activity is twofold lower in the presence of Mn(2+), Co(2+) and Ni(2+). The insignificant effect of the metal chelating agent EDTA on the hydantoin racemase activity would indicate that it is not a metalloenzyme. In terms of biological role, may be involved in the asymmetric conversion of racemic 5-substituted hydantoins to the corresponding L-amino acids. Catalyzes the racemization via enolization of D- and L-5-monosubstituted hydantoins. In Rhizobium meliloti (Ensifer meliloti), this protein is Hydantoin racemase.